The primary structure comprises 82 residues: Consomatin Ar1 (82 aa).

The N-terminal stretch at 1–22 (MQTAYWVVVMMMMVWVTAPVSE) is a signal peptide. Positions 23–60 (GGKLSDVIWGLVPDDLTPQIILQILNASRHAYRRVRPR) are excised as a propeptide. The cysteines at positions 64 and 69 are disulfide-linked. W66 is modified (D-tryptophan). 4-hydroxyproline is present on residues P70, P71, and P73. The propeptide occupies 74 to 82 (QWIHPLVKR).

Belongs to the conotoxin C superfamily. Consomatin family. In terms of tissue distribution, expressed by the venom duct.

It is found in the secreted. Moderately activates human somatostatin receptors (SSTR) with a preferential activation of SSTR1 and SSTR4. In vivo, does not cause behavioral changes in mice within a few minutes of intracranial injection, but causes a progressive loss of movement thereafter. Four to five hours after injection, mice recover, even with the highest dose tested. Shows antinociception and antihyperalgesia activities in two mouse models of acute pain, most probably by acting outside the central nervous system. The polypeptide is Consomatin Ar1 (Conus arenatus (Sand-dusted cone)).